The sequence spans 192 residues: Large ribosomal subunit protein bL25 (192 aa).

This sequence belongs to the bacterial ribosomal protein bL25 family. CTC subfamily. As to quaternary structure, part of the 50S ribosomal subunit; part of the 5S rRNA/L5/L18/L25 subcomplex. Contacts the 5S rRNA. Binds to the 5S rRNA independently of L5 and L18.

This is one of the proteins that binds to the 5S RNA in the ribosome where it forms part of the central protuberance. This chain is Large ribosomal subunit protein bL25, found in Marinomonas sp. (strain MWYL1).